The chain runs to 359 residues: Fructose-bisphosphate aldolase, cytoplasmic isozyme (359 aa).

Residues R52 and K142 each contribute to the substrate site. E184 acts as the Proton acceptor in catalysis. K226 functions as the Schiff-base intermediate with dihydroxyacetone-P in the catalytic mechanism.

It belongs to the class I fructose-bisphosphate aldolase family.

Its subcellular location is the cytoplasm. The catalysed reaction is beta-D-fructose 1,6-bisphosphate = D-glyceraldehyde 3-phosphate + dihydroxyacetone phosphate. It functions in the pathway carbohydrate degradation; glycolysis; D-glyceraldehyde 3-phosphate and glycerone phosphate from D-glucose: step 4/4. The sequence is that of Fructose-bisphosphate aldolase, cytoplasmic isozyme (ALDC) from Cicer arietinum (Chickpea).